A 218-amino-acid chain; its full sequence is Uracil-DNA glycosylase (218 aa).

The active-site Proton acceptor is the Asp68.

The protein belongs to the uracil-DNA glycosylase (UDG) superfamily. UNG family. Homodimer. Interacts with protein OPG148. Component of the Uracil-DNA glycosylase(UDG)-OPG148-polymerase complex; OPG148 and UDG form a heterodimeric processivity factor that associates with OPG71 to form the processive polymerase holoenzyme.

It catalyses the reaction Hydrolyzes single-stranded DNA or mismatched double-stranded DNA and polynucleotides, releasing free uracil.. Functionally, plays an essential role in viral replication as a component of the DNA polymerase processivity factor. Excises uracil residues from the DNA which can arise as a result of misincorporation of dUMP residues by DNA polymerase or due to deamination of cytosine. This Homo sapiens (Human) protein is Uracil-DNA glycosylase (OPG116).